The following is a 188-amino-acid chain: dCTP deaminase (188 aa).

DCTP contacts are provided by residues 111–116, 135–137, Gln-156, Tyr-170, and Gln-180; these read KSTYAR and TLE. Glu-137 (proton donor/acceptor) is an active-site residue.

The protein belongs to the dCTP deaminase family. Homotrimer.

It catalyses the reaction dCTP + H2O + H(+) = dUTP + NH4(+). It participates in pyrimidine metabolism; dUMP biosynthesis; dUMP from dCTP (dUTP route): step 1/2. Functionally, catalyzes the deamination of dCTP to dUTP. The sequence is that of dCTP deaminase from Nitrosomonas europaea (strain ATCC 19718 / CIP 103999 / KCTC 2705 / NBRC 14298).